A 26-amino-acid polypeptide reads, in one-letter code: L-amino-acid oxidase (26 aa).

This sequence belongs to the flavin monoamine oxidase family. As to quaternary structure, monomer. The cofactor is FAD. Post-translationally, not glycosylated. In terms of tissue distribution, expressed by the ink gland.

Its subcellular location is the secreted. It catalyses the reaction an L-alpha-amino acid + O2 + H2O = a 2-oxocarboxylate + H2O2 + NH4(+). Its function is as follows. Catalyzes the oxidative deamination of positively charged L-amino acids L-Lys and L-Arg but not of amino acids L-His, L-Asp or L-Glu. Has antibacterial activity against the Gram-positive bacterium S.aureus (MIC=15 ug/ml). This antibacterial activity is bacteriostatic in the absence of amino acids L-Lys or L-Arg but bactericidal in their presence. The antibacterial effect is largely dependent on H(2)O(2) produced in the oxidative deamination of substrates. Has hemagglutinating activity towards rabbit erythrocytes. Hemagglutinating activity is inhibited by the glycoprotein fetuin, but not by glucose, mannose, galactose, N-acetylglucosamine, N-acetylgalactosamine or sialic acid. The sequence is that of L-amino-acid oxidase from Aplysia dactylomela (Spotted sea hare).